Consider the following 106-residue polypeptide: UPF0060 membrane protein CHU_3331 (106 aa).

A run of 4 helical transmembrane segments spans residues 5–25, 31–51, 59–79, and 85–105; these read FYFI…WLHF, ALLL…LTKI, AYAV…YGIE, and IWDY…LFAP.

This sequence belongs to the UPF0060 family.

It is found in the cell inner membrane. This is UPF0060 membrane protein CHU_3331 from Cytophaga hutchinsonii (strain ATCC 33406 / DSM 1761 / CIP 103989 / NBRC 15051 / NCIMB 9469 / D465).